We begin with the raw amino-acid sequence, 519 residues long: MKYKDLRDFIHGLEQRGELRRVTQPVSPVLEMTELCDRVLRAGGPALLFDAPAGHRFPVLGNLFGTPRRVALGMGVDADDEAALASLRDIGRLLSALKEPDPPKRLKDAGKLLSLAKAVWDMSPKTVSAPPCQEIVWEGDDVDLHKLPIQTCWPGDAGPLLTWGLTVTRGPNKTRQNLGIYRQQLIGRNKLIMRWLAHRGGALDFREFALKHPGQPYPVAVVLGADPATMLGAVTPVPDSLSEYQFAGLLRGARTELAKCVTPGVDALQVPARAEIVLEGFIHPQQGAPAPAPEGAPPRPAAGAAAGYEHALEGPYGDHTGYYNEQEWFPVFTVERITMRRDAIYHSTYTGKPPDEPAVLGVALNEVFVPLLQKQFAEITDFYLPPEGCSYRMAIVQMKKSYAGHAKRVMFGVWSFLRQFMYTKFIVVVDEDVNVRDWKEVIWAITTRVDPARDTVLVENTPIDYLDFASPVAGLGSKMGLDATNKWPGETQREWGRPIEMDAAVKARVDRLWTEIGLS.

Asparagine 177 is a Mn(2+) binding site. Residues 180-182 (IYR), 194-196 (RWL), and 199-200 (RG) contribute to the prenylated FMN site. Mn(2+) is bound at residue glutamate 243. The active-site Proton donor is aspartate 318.

It belongs to the UbiD family. In terms of assembly, homohexamer. Prenylated FMN serves as cofactor. The cofactor is Mn(2+).

Its subcellular location is the cell membrane. It catalyses the reaction a 4-hydroxy-3-(all-trans-polyprenyl)benzoate + H(+) = a 2-(all-trans-polyprenyl)phenol + CO2. Its pathway is cofactor biosynthesis; ubiquinone biosynthesis. Catalyzes the decarboxylation of 3-octaprenyl-4-hydroxy benzoate to 2-octaprenylphenol, an intermediate step in ubiquinone biosynthesis. This is 3-octaprenyl-4-hydroxybenzoate carboxy-lyase from Burkholderia pseudomallei (strain 1710b).